Here is a 505-residue protein sequence, read N- to C-terminus: Probable Xaa-Pro aminopeptidase Pc16g13390 (505 aa).

Positions 287, 298, 436, and 475 each coordinate Mn(2+).

This sequence belongs to the peptidase M24B family. Requires Mn(2+) as cofactor.

The enzyme catalyses Release of any N-terminal amino acid, including proline, that is linked to proline, even from a dipeptide or tripeptide.. Catalyzes the removal of a penultimate prolyl residue from the N-termini of peptides. This is Probable Xaa-Pro aminopeptidase Pc16g13390 from Penicillium rubens (strain ATCC 28089 / DSM 1075 / NRRL 1951 / Wisconsin 54-1255) (Penicillium chrysogenum).